The primary structure comprises 260 residues: (+)-borneol dehydrogenase 1 (260 aa).

Residues 20–26 (GGASGIG), aspartate 44, 67–68 (DV), and 94–96 (NAG) contribute to the NAD(+) site. Serine 148 (proton donor) is an active-site residue. Positions 161, 165, and 196 each coordinate NAD(+). The active-site Proton acceptor is tyrosine 161. Residue lysine 165 is the Proton donor/acceptor of the active site.

It belongs to the short-chain dehydrogenases/reductases (SDR) family.

It catalyses the reaction (1R,2S,4R)-borneol + NAD(+) = (1R,4R)-camphor + NADH + H(+). Its function is as follows. Involved in the biosynthesis of monoterpene natural products related to camphor. Catalayzes the oxidation of (+)-borneol to (+)-camphor. Shows absolute selectivity towards (+)-borneol. Catalyzes the oxidation of (+)-isoborneol to (-)-camphor. Shows absolute selectivity towards (+)-isoborneol. The polypeptide is (+)-borneol dehydrogenase 1 (Salvia officinalis (Sage)).